Reading from the N-terminus, the 250-residue chain is Envelope glycoprotein L (250 aa).

A signal peptide spans 1-18 (MELLLFVMSLILLTFSKA). The region spanning 31-239 (KLDDCIAAVI…ETYNSKLPFR (209 aa)) is the gL betaherpesvirus-type domain. A disulfide bond links Cys-136 and Cys-141.

It belongs to the herpesviridae glycoprotein L (gL) family. Betaherpesvirinae gL subfamily. In terms of assembly, interacts with glycoprotein H (gH); this interaction is necessary for the correct processing and cell surface expression of gH. Part of a gH-gL-gO complex.

It is found in the virion membrane. Its subcellular location is the host cell membrane. The protein resides in the host Golgi apparatus. It localises to the host trans-Golgi network. The heterodimer glycoprotein H-glycoprotein L is required for the fusion of viral and plasma membranes leading to virus entry into the host cell. Acts as a functional inhibitor of gH and maintains gH in an inhibited form. Upon binding to host integrins, gL dissociates from gH leading to activation of the viral fusion glycoproteins gB and gH. The sequence is that of Envelope glycoprotein L from Human herpesvirus 6A (strain Uganda-1102) (HHV-6 variant A).